The chain runs to 973 residues: Nuclear factor NF-kappa-B p105 subunit (973 aa).

The region spanning 38–245 is the RHD domain; sequence ADGPYLQILE…DAIYDSKAPN (208 aa). Cys-60 carries the post-translational modification S-nitrosocysteine; alternate. The S-(15-deoxy-Delta12,14-prostaglandin J2-9-yl)cysteine; alternate moiety is linked to residue Cys-60. Residue Lys-324 forms a Glycyl lysine isopeptide (Lys-Gly) (interchain with G-Cter in SUMO2) linkage. At Ser-336 the chain carries Phosphoserine. The Nuclear localization signal motif lies at 359–364; the sequence is QRKRQK. The segment at 371–394 is GRR; that stretch reads DSFGGGSGAGAGGGGMFGSGGGGG. Residues 434 to 467 are disordered; that stretch reads TINTKFKNEPRDCAKSDDREILNPPEKETQGEGP. The segment at 435–973 is interaction with CFLAR; it reads INTKFKNEPR…GQDGPIEGKI (539 aa). Basic and acidic residues predominate over residues 439 to 463; it reads FKNEPRDCAKSDDREILNPPEKETQ. Lys-440 is subject to N6-acetyllysine. Ser-449 bears the Phosphoserine mark. 6 ANK repeats span residues 540–570, 579–608, 612–641, 648–677, 682–711, and 716–745; these read NGDSVLHLAIIHLHAQLVRDLLEVTSGSISD, LYQTPLHLAVITKQEDVVEDLLRVGADLSL, WGNSVLHLAAKEGHDKILGVLLKNSKAALL, EGLNAIHIAVMSNSLSCLQLLVAAGAEVNA, SGRTALHLAVEYDNISLAGCLLLEGDALVD, and DGTTPLHIAAGRGSTRLAALLKAAGADPLV. The segment at 648–682 is essential for interaction with HIF1AN; the sequence is EGLNAIHIAVMSNSLSCLQLLVAAGAEVNAQEQKS. Asn-676 carries the post-translational modification (3S)-3-hydroxyasparagine; by HIF1AN. The residue at position 757 (Ser-757) is a Phosphoserine. An ANK 7 repeat occupies 769-799; that stretch reads PGTTPLDMAANWQVFDILNGKPYEPVFTSDD. The 88-residue stretch at 803–890 folds into the Death domain; sequence QGDIKQLTED…EAIEVIQAAF (88 aa). A Phosphoserine modification is found at Ser-898. Phosphoserine; by GSK3-beta; in vitro is present on Ser-912. Ser-928 carries the phosphoserine modification. Ser-932 and Ser-937 each carry phosphoserine; by IKKB. Ser-942 is subject to Phosphoserine. Thr-948 is subject to Phosphothreonine.

Component of the NF-kappa-B p65-p50 complex. Homodimer; component of the NF-kappa-B p50-p50 complex. Component of the NF-kappa-B p105-p50 complex. Component of the NF-kappa-B p50-c-Rel complex. Component of a complex consisting of the NF-kappa-B p50-p50 homodimer and BCL3. Also interacts with MAP3K8. NF-kappa-B p50 subunit interacts with NCOA3 coactivator, which may coactivate NF-kappa-B dependent expression via its histone acetyltransferase activity. Interacts with TSC22D3; this interaction prevents nuclear translocation and DNA-binding. Interacts with SPAG9 and UNC5CL. NFKB1/p105 interacts with CFLAR; the interaction inhibits p105 processing into p50. NFKB1/p105 forms a ternary complex with MAP3K8 and TNIP2. Interacts with GSK3B; the interaction prevents processing of p105 to p50. NFKB1/p50 interacts with NFKBIE. NFKB1/p50 interacts with NFKBIZ. Nuclear factor NF-kappa-B p50 subunit interacts with NFKBID. Directly interacts with MEN1. Interacts with HIF1AN. Interacts with FEM1A; interaction is direct. Generation of the NF-kappa-B p50 (Nuclear factor NF-kappa-B p50 subunit) transcription factor takes place both cotranslationally and post-translationally via non-mutually exclusive mechanisms. A cotranslational processing allows the production of both p50 and p105 (Nuclear factor NF-kappa-B p105 subunit) from a single NFKB1 mRNA. While translation occurs, the particular unfolded structure after the GRR repeat region acts as a substrate for the proteasome, promoting degradation of the C-terminus. The GRR acts as a proteasomal 'stop signal', protecting the region upstream of the GRR from degradation and promoting generation of p50. It is unclear if limited proteasome degradation during cotranslational processing depends on ubiquitination. NF-kappa-B p50 is also generated post-translationally following ubiquitination by the KPC complex, leading to limited processing by the proteasome downstream of the GRR region, thereby generating p50. Post-translationally, phosphorylation at the C-terminus by IKBKB/IKKB acts as a signal for ubiquitination and promotes either complete degradation or processing to generate the NF-kappa-B p50 (Nuclear factor NF-kappa-B p50 subunit). Phosphorylation at Ser-912 primes p105 for proteolytic processing in response to TNF-alpha stimulation. Phosphorylation at Ser-928, Ser-932 and Ser-937 are required for BTRC/BTRCP-mediated ubiquitination and proteolysis. Phosphorylation at Ser-932 is also required for ubiquitination by the KPC complex and limited processing to generate NF-kappa-B p50 (Nuclear factor NF-kappa-B p50 subunit). In terms of processing, polyubiquitinated at multiple Lys residues in the C-terminus. Polyubiquitinated by the SCF(FBXW11) and SCF(BTRC) complexes following phosphorylation at Ser-928, Ser-932 and Ser-937, leading to its complete degradation. In contrast, polyubiquitination by the KPC complex following phosphorylation at Ser-932 leads to limited proteosomal processing and generation of the active NF-kappa-B p50 (Nuclear factor NF-kappa-B p50 subunit). S-nitrosylation of Cys-60 affects DNA binding. Post-translationally, the covalent modification of cysteine by 15-deoxy-Delta12,14-prostaglandin-J2 is autocatalytic and reversible. It may occur as an alternative to other cysteine modifications, such as S-nitrosylation and S-palmitoylation.

It localises to the cytoplasm. The protein localises to the nucleus. NF-kappa-B is a pleiotropic transcription factor present in almost all cell types and is the endpoint of a series of signal transduction events that are initiated by a vast array of stimuli related to many biological processes such as inflammation, immunity, differentiation, cell growth, tumorigenesis and apoptosis. NF-kappa-B is a homo- or heterodimeric complex formed by the Rel-like domain-containing proteins RELA/p65, RELB, NFKB1/p105, NFKB1/p50, REL and NFKB2/p52 and the heterodimeric p65-p50 complex appears to be most abundant one. The dimers bind at kappa-B sites in the DNA of their target genes and the individual dimers have distinct preferences for different kappa-B sites that they can bind with distinguishable affinity and specificity. Different dimer combinations act as transcriptional activators or repressors, respectively. NF-kappa-B is controlled by various mechanisms of post-translational modification and subcellular compartmentalization as well as by interactions with other cofactors or corepressors. NF-kappa-B complexes are held in the cytoplasm in an inactive state complexed with members of the NF-kappa-B inhibitor (I-kappa-B) family. In a conventional activation pathway, I-kappa-B is phosphorylated by I-kappa-B kinases (IKKs) in response to different activators, subsequently degraded thus liberating the active NF-kappa-B complex which translocates to the nucleus. NF-kappa-B heterodimeric p65-p50 and RelB-p50 complexes are transcriptional activators. The NF-kappa-B p50-p50 homodimer is a transcriptional repressor, but can act as a transcriptional activator when associated with BCL3. NFKB1 appears to have dual functions such as cytoplasmic retention of attached NF-kappa-B proteins by p105 and generation of p50 by a cotranslational processing. The proteasome-mediated process ensures the production of both p50 and p105 and preserves their independent function, although processing of NFKB1/p105 also appears to occur post-translationally. p50 binds to the kappa-B consensus sequence 5'-GGRNNYYCC-3', located in the enhancer region of genes involved in immune response and acute phase reactions. In a complex with MAP3K8, NFKB1/p105 represses MAP3K8-induced MAPK signaling; active MAP3K8 is released by proteasome-dependent degradation of NFKB1/p105. Functionally, P105 is the precursor of the active p50 subunit (Nuclear factor NF-kappa-B p50 subunit) of the nuclear factor NF-kappa-B. Acts as a cytoplasmic retention of attached NF-kappa-B proteins by p105. In terms of biological role, constitutes the active form, which associates with RELA/p65 to form the NF-kappa-B p65-p50 complex to form a transcription factor. Together with RELA/p65, binds to the kappa-B consensus sequence 5'-GGRNNYYCC-3', located in the enhancer region of genes involved in immune response and acute phase reactions. The polypeptide is Nuclear factor NF-kappa-B p105 subunit (Nfkb1) (Rattus norvegicus (Rat)).